The sequence spans 165 residues: Anaerobic nitrite reductase GLB1 (165 aa).

Positions 12-162 (VFGEEQEALV…LVAAIKREMK (151 aa)) constitute a Globin domain. The short motif at 45-49 (EIAPS) is the Homodimerization element. Positions 55, 69, 73, 103, 107, and 108 each coordinate heme b. The Homodimerization motif lies at 115 to 127 (DGHFEVTGFALLE).

This sequence belongs to the plant globin family. Homodimer. Requires heme b as cofactor. As to expression, in embryonic organs and at low levels in vegetative organs.

It is found in the cytoplasm. Its subcellular location is the nucleus. The catalysed reaction is Fe(III)-heme b-[protein] + nitric oxide + H2O = Fe(II)-heme b-[protein] + nitrite + 2 H(+). Its function is as follows. Phytoglobin that reduces nitrite to nitric oxide (NO) under anoxic conditions (e.g. during flooding or in waterlogged soil). May not function as an oxygen storage or transport protein. Has an unusually high affinity for O(2) through an hexacoordinate heme iron because of a very low dissociation constant. The sequence is that of Anaerobic nitrite reductase GLB1 (HB) from Zea mays (Maize).